Consider the following 113-residue polypeptide: Putative pterin-4-alpha-carbinolamine dehydratase (113 aa).

This sequence belongs to the pterin-4-alpha-carbinolamine dehydratase family.

It carries out the reaction (4aS,6R)-4a-hydroxy-L-erythro-5,6,7,8-tetrahydrobiopterin = (6R)-L-erythro-6,7-dihydrobiopterin + H2O. This chain is Putative pterin-4-alpha-carbinolamine dehydratase, found in Chlorobium limicola (strain DSM 245 / NBRC 103803 / 6330).